Here is a 295-residue protein sequence, read N- to C-terminus: Ribosomal RNA small subunit methyltransferase H (295 aa).

S-adenosyl-L-methionine is bound by residues Gly35–His37, Glu55, Phe82, Asp103, and Gln110.

The protein belongs to the methyltransferase superfamily. RsmH family.

The protein resides in the cytoplasm. It catalyses the reaction cytidine(1402) in 16S rRNA + S-adenosyl-L-methionine = N(4)-methylcytidine(1402) in 16S rRNA + S-adenosyl-L-homocysteine + H(+). In terms of biological role, specifically methylates the N4 position of cytidine in position 1402 (C1402) of 16S rRNA. The protein is Ribosomal RNA small subunit methyltransferase H of Desulfotalea psychrophila (strain LSv54 / DSM 12343).